The chain runs to 329 residues: D-alanine--D-alanine ligase (329 aa).

The ATP-grasp domain maps to Lys121–Thr327. Ala151–Glu206 serves as a coordination point for ATP. 3 residues coordinate Mg(2+): Asp281, Glu294, and Asn296.

Belongs to the D-alanine--D-alanine ligase family. Mg(2+) is required as a cofactor. The cofactor is Mn(2+).

It is found in the cytoplasm. The catalysed reaction is 2 D-alanine + ATP = D-alanyl-D-alanine + ADP + phosphate + H(+). It functions in the pathway cell wall biogenesis; peptidoglycan biosynthesis. In terms of biological role, cell wall formation. In Vibrio cholerae serotype O1 (strain ATCC 39541 / Classical Ogawa 395 / O395), this protein is D-alanine--D-alanine ligase.